The chain runs to 1261 residues: Mediator of RNA polymerase II transcription subunit 14 (1261 aa).

Residues methionine 1 to threonine 11 show a composition bias toward basic and acidic residues. Disordered stretches follow at residues methionine 1–histidine 21, asparagine 413–glutamate 435, and aspartate 1193–threonine 1220. The span at isoleucine 417–aspartate 427 shows a compositional bias: acidic residues. The span at glutamine 1205–threonine 1220 shows a compositional bias: basic and acidic residues.

It belongs to the Mediator complex subunit 14 family. Component of the Mediator complex.

The protein localises to the nucleus. Component of the Mediator complex, a coactivator involved in the regulated transcription of nearly all RNA polymerase II-dependent genes. Mediator functions as a bridge to convey information from gene-specific regulatory proteins to the basal RNA polymerase II transcription machinery. Mediator is recruited to promoters by direct interactions with regulatory proteins and serves as a scaffold for the assembly of a functional preinitiation complex with RNA polymerase II and the general transcription factors. The chain is Mediator of RNA polymerase II transcription subunit 14 (MED14) from Candida albicans (strain SC5314 / ATCC MYA-2876) (Yeast).